A 233-amino-acid chain; its full sequence is 7-cyano-7-deazaguanine synthase (233 aa).

ATP is bound at residue 18-28 (FSGGQDSTTCL). Cys-198, Cys-213, Cys-216, and Cys-219 together coordinate Zn(2+).

The protein belongs to the QueC family. Zn(2+) serves as cofactor.

It catalyses the reaction 7-carboxy-7-deazaguanine + NH4(+) + ATP = 7-cyano-7-deazaguanine + ADP + phosphate + H2O + H(+). It participates in purine metabolism; 7-cyano-7-deazaguanine biosynthesis. In terms of biological role, catalyzes the ATP-dependent conversion of 7-carboxy-7-deazaguanine (CDG) to 7-cyano-7-deazaguanine (preQ(0)). This chain is 7-cyano-7-deazaguanine synthase, found in Wolinella succinogenes (strain ATCC 29543 / DSM 1740 / CCUG 13145 / JCM 31913 / LMG 7466 / NCTC 11488 / FDC 602W) (Vibrio succinogenes).